A 1658-amino-acid chain; its full sequence is Collagen alpha-1(XXVII) chain B (1658 aa).

The first 38 residues, 1-38 (MEPDNTPSSRLRAAGVGGRAVFFCMVLYCTCCLRLAQA), serve as a signal peptide directing secretion. A Laminin G-like domain is found at 66-229 (GVILTTRARI…NYCKYIKKQC (164 aa)). A compositionally biased stretch (polar residues) spans 308 to 323 (SIRNRTSQISPKPTQQ). 6 disordered regions span residues 308–332 (SIRN…KKER), 345–364 (VTDS…TTTT), 427–550 (GLKG…GNMG), 571–614 (GERG…APGP), 637–1332 (GPKG…DAGE), and 1377–1415 (IIGP…GPPG). A triple-helical region region spans residues 424-1417 (ELTGLKGEPG…RGPPGPPGLP (994 aa)). 7 consecutive Collagen-like domains span residues 425-478 (LTGL…GNPG), 493-552 (GLVG…MGPK), 556-615 (GFIG…PGPV), 622-681 (GDMG…PGLP), 685-744 (GKPG…PGLE), 748-807 (GPVG…MGLA), and 811-870 (GDRG…RGPD). The span at 434–444 (LPGPPGPPGQP) shows a compositional bias: pro residues. Low complexity predominate over residues 491–506 (DPGLVGLPGQPGQPGR). 2 stretches are compositionally biased toward low complexity: residues 657 to 666 (LGLPGEPGEP) and 678 to 692 (PGLP…PQGK). Positions 733–742 (GIPGPGGLPG) are enriched in gly residues. Low complexity-rich tracts occupy residues 837-852 (RGLS…HGSR) and 875-890 (EKGM…PPGK). Collagen-like domains follow at residues 892-951 (GLSG…IGLP), 952-1011 (GKAG…VGLE), 1024-1083 (GTEG…IGPK), 1084-1137 (GSRG…DGKV), 1139-1198 (GPPG…KGSK), 1199-1258 (GNKG…PGDL), 1268-1327 (GKPG…KGQP), and 1361-1420 (GPQG…PAVA). Basic and acidic residues predominate over residues 1040–1058 (PEGKPGKIGERGKPGEKGS). Residues 1112 to 1124 (HQGPQGSLGSPGP) show a composition bias toward low complexity. The segment covering 1125-1137 (KGEKGEQGDDGKV) has biased composition (basic and acidic residues). Over residues 1215–1230 (NRGSPGPVGVPGPRGV) the composition is skewed to low complexity. Over residues 1307 to 1316 (GLNGGMGFPG) the composition is skewed to gly residues. Positions 1402-1415 (RGPPGPRGPPGPPG) are enriched in pro residues. A propeptide spans 1421 to 1658 (FSHENEALGA…HLEVGPVCFL (238 aa)) (C-terminal propeptide). The 201-residue stretch at 1458–1658 (SEIFKTLHYL…HLEVGPVCFL (201 aa)) folds into the Fibrillar collagen NC1 domain. 3 disulfides stabilise this stretch: C1488/C1520, C1529/C1656, and C1565/C1609. Residues D1506, N1508, C1511, and D1514 each contribute to the Ca(2+) site. N-linked (GlcNAc...) asparagine glycosylation occurs at N1567.

It belongs to the fibrillar collagen family. As to expression, weakly expressed in the notochord from the 6 somite stage. Expressed throughout the notochord at 13 somites, then becomes restricted to the distal tip of the notochord by 24 hpf. Also expressed in head cartilages by 48 hpf.

The protein resides in the secreted. Its subcellular location is the extracellular space. The protein localises to the extracellular matrix. In terms of biological role, may play a role during the calcification of cartilage and the transition of cartilage to bone. Together with col27a1a, plays a role in development of the notochord and axial skeleton. This Danio rerio (Zebrafish) protein is Collagen alpha-1(XXVII) chain B (col27a1b).